The chain runs to 405 residues: Eukaryotic translation initiation factor 5 (405 aa).

27–34 (GRGNGIKT) lines the GTP pocket. The tract at residues 143–202 (NPPDSVSGSKKKKKAATASANVRGGGLSISDIAQGKSQNAPSDGTGSSTPQHHDEDEDEL) is disordered. Residues serine 170 and serine 172 each carry the phosphoserine modification. The span at 177–192 (GKSQNAPSDGTGSSTP) shows a compositional bias: polar residues. Threonine 191 is modified (phosphothreonine). A Phosphoserine modification is found at serine 228. The W2 domain maps to 241-402 (VNSELTQLDE…ETAESDDDEE (162 aa)). The residue at position 317 (threonine 317) is a Phosphothreonine. Serine 397 is subject to Phosphoserine.

The protein belongs to the eIF-2-beta/eIF-5 family. Monomer. The factors eIF-1, eIF-2, eIF-3, TIF5/eIF-5 and methionyl-tRNAi form a multifactor complex (MFC) that may bind to the 40S ribosome. TIF32, NIP1 and TIF5/eIF-5 comprise a minimal 40S-ribosome-binding unit. Interacts with NIP1. Interacts with SUI3.

In terms of biological role, catalyzes the hydrolysis of GTP bound to the 40S ribosomal initiation complex (40S.mRNA.Met-tRNA[F].eIF-2.GTP) with the subsequent joining of a 60S ribosomal subunit resulting in the release of eIF-2 and the guanine nucleotide. The subsequent joining of a 60S ribosomal subunit results in the formation of a functional 80S initiation complex (80S.mRNA.Met-tRNA[F]). eIF-5 is essential for cell viability. The chain is Eukaryotic translation initiation factor 5 (TIF5) from Saccharomyces cerevisiae (strain ATCC 204508 / S288c) (Baker's yeast).